The chain runs to 154 residues: 6,7-dimethyl-8-ribityllumazine synthase (154 aa).

Residues phenylalanine 22, 56 to 58 (AFE), and 80 to 82 (AVI) contribute to the 5-amino-6-(D-ribitylamino)uracil site. Residue 85–86 (AT) participates in (2S)-2-hydroxy-3-oxobutyl phosphate binding. The Proton donor role is filled by histidine 88. Phenylalanine 113 contacts 5-amino-6-(D-ribitylamino)uracil. Residue arginine 127 coordinates (2S)-2-hydroxy-3-oxobutyl phosphate.

This sequence belongs to the DMRL synthase family. In terms of assembly, forms an icosahedral capsid composed of 60 subunits, arranged as a dodecamer of pentamers.

It catalyses the reaction (2S)-2-hydroxy-3-oxobutyl phosphate + 5-amino-6-(D-ribitylamino)uracil = 6,7-dimethyl-8-(1-D-ribityl)lumazine + phosphate + 2 H2O + H(+). It functions in the pathway cofactor biosynthesis; riboflavin biosynthesis; riboflavin from 2-hydroxy-3-oxobutyl phosphate and 5-amino-6-(D-ribitylamino)uracil: step 1/2. Its function is as follows. Catalyzes the formation of 6,7-dimethyl-8-ribityllumazine by condensation of 5-amino-6-(D-ribitylamino)uracil with 3,4-dihydroxy-2-butanone 4-phosphate. This is the penultimate step in the biosynthesis of riboflavin. The polypeptide is 6,7-dimethyl-8-ribityllumazine synthase (Geobacillus thermodenitrificans (strain NG80-2)).